The following is a 30-amino-acid chain: Diuretic hormone 2 (30 aa).

V30 bears the Valine amide mark.

Belongs to the sauvagine/corticotropin-releasing factor/urotensin I family.

The protein resides in the secreted. Functionally, regulation of fluid secretion. The sequence is that of Diuretic hormone 2 from Manduca sexta (Tobacco hawkmoth).